A 481-amino-acid polypeptide reads, in one-letter code: Aspartyl/glutamyl-tRNA(Asn/Gln) amidotransferase subunit B (481 aa).

The protein belongs to the GatB/GatE family. GatB subfamily. As to quaternary structure, heterotrimer of A, B and C subunits.

The catalysed reaction is L-glutamyl-tRNA(Gln) + L-glutamine + ATP + H2O = L-glutaminyl-tRNA(Gln) + L-glutamate + ADP + phosphate + H(+). It carries out the reaction L-aspartyl-tRNA(Asn) + L-glutamine + ATP + H2O = L-asparaginyl-tRNA(Asn) + L-glutamate + ADP + phosphate + 2 H(+). Allows the formation of correctly charged Asn-tRNA(Asn) or Gln-tRNA(Gln) through the transamidation of misacylated Asp-tRNA(Asn) or Glu-tRNA(Gln) in organisms which lack either or both of asparaginyl-tRNA or glutaminyl-tRNA synthetases. The reaction takes place in the presence of glutamine and ATP through an activated phospho-Asp-tRNA(Asn) or phospho-Glu-tRNA(Gln). This is Aspartyl/glutamyl-tRNA(Asn/Gln) amidotransferase subunit B from Pseudomonas fluorescens (strain ATCC BAA-477 / NRRL B-23932 / Pf-5).